Here is a 141-residue protein sequence, read N- to C-terminus: Nucleoside diphosphate kinase (141 aa).

ATP is bound by residues lysine 11, phenylalanine 59, arginine 87, threonine 93, arginine 104, and asparagine 114. Residue histidine 117 is the Pros-phosphohistidine intermediate of the active site.

The protein belongs to the NDK family. In terms of assembly, homotetramer. It depends on Mg(2+) as a cofactor.

The protein localises to the cytoplasm. It catalyses the reaction a 2'-deoxyribonucleoside 5'-diphosphate + ATP = a 2'-deoxyribonucleoside 5'-triphosphate + ADP. The enzyme catalyses a ribonucleoside 5'-diphosphate + ATP = a ribonucleoside 5'-triphosphate + ADP. Functionally, major role in the synthesis of nucleoside triphosphates other than ATP. The ATP gamma phosphate is transferred to the NDP beta phosphate via a ping-pong mechanism, using a phosphorylated active-site intermediate. The protein is Nucleoside diphosphate kinase of Polaromonas naphthalenivorans (strain CJ2).